We begin with the raw amino-acid sequence, 225 residues long: ATP synthase subunit a (225 aa).

Transmembrane regions (helical) follow at residues 16–36, 79–99, 105–125, 176–196, and 202–222; these read LFVY…VAKL, LVAT…IPGF, SLNL…FEGI, LFLL…AYAL, and VLQT…AVAI.

Belongs to the ATPase A chain family. As to quaternary structure, F-type ATPases have 2 components, CF(1) - the catalytic core - and CF(0) - the membrane proton channel. CF(1) has five subunits: alpha(3), beta(3), gamma(1), delta(1), epsilon(1). CF(0) has three main subunits: a(1), b(2) and c(9-12). The alpha and beta chains form an alternating ring which encloses part of the gamma chain. CF(1) is attached to CF(0) by a central stalk formed by the gamma and epsilon chains, while a peripheral stalk is formed by the delta and b chains.

It localises to the cell inner membrane. Its function is as follows. Key component of the proton channel; it plays a direct role in the translocation of protons across the membrane. The polypeptide is ATP synthase subunit a (Campylobacter curvus (strain 525.92)).